Here is a 206-residue protein sequence, read N- to C-terminus: LexA repressor (206 aa).

A DNA-binding region (H-T-H motif) is located at residues 28–48 (RAEIARELGFRSANAAEEHLK). Residues S123 and K160 each act as for autocatalytic cleavage activity in the active site.

This sequence belongs to the peptidase S24 family. Homodimer.

The enzyme catalyses Hydrolysis of Ala-|-Gly bond in repressor LexA.. Represses a number of genes involved in the response to DNA damage (SOS response), including recA and lexA. In the presence of single-stranded DNA, RecA interacts with LexA causing an autocatalytic cleavage which disrupts the DNA-binding part of LexA, leading to derepression of the SOS regulon and eventually DNA repair. The chain is LexA repressor from Vibrio atlanticus (strain LGP32) (Vibrio splendidus (strain Mel32)).